Reading from the N-terminus, the 207-residue chain is Octanoyltransferase (207 aa).

Positions 27–203 (ADTEDELWVV…HLETQLTPKA (177 aa)) constitute a BPL/LPL catalytic domain. Residues 66–73 (RGGQITYH), 133–135 (SLG), and 146–148 (GLA) contribute to the substrate site. Cys-164 functions as the Acyl-thioester intermediate in the catalytic mechanism.

This sequence belongs to the LipB family.

Its subcellular location is the cytoplasm. The catalysed reaction is octanoyl-[ACP] + L-lysyl-[protein] = N(6)-octanoyl-L-lysyl-[protein] + holo-[ACP] + H(+). It participates in protein modification; protein lipoylation via endogenous pathway; protein N(6)-(lipoyl)lysine from octanoyl-[acyl-carrier-protein]: step 1/2. Functionally, catalyzes the transfer of endogenously produced octanoic acid from octanoyl-acyl-carrier-protein onto the lipoyl domains of lipoate-dependent enzymes. Lipoyl-ACP can also act as a substrate although octanoyl-ACP is likely to be the physiological substrate. The polypeptide is Octanoyltransferase (Neisseria gonorrhoeae (strain ATCC 700825 / FA 1090)).